Reading from the N-terminus, the 430-residue chain is MPSVVVVGTQWGDEGKGKITDFLSSNAEVIARYQGGDNAGHTIVIDGKKFKLHLIPSGIFFPEKISVIGNGVVVNPKSLIEEIAYLAENGVSANSLRISDRAHVILPYHKKLDFLQEEAKGDKKIGTTIKGIGPAYMDKAARVGIRIADLLDKEIFEERLRTNLEVKNREFVKMYDSEPLEFEEIFEEYYEYGQQLKKYVTDTSVILNDALDAGKRVLFEGAQGVMLDIDQGTYPFVTSSNPVAGGVTIGSGVGPSKISKVVGVCKAYTSRVGDGPFPTELFDEVGHQIREVGHEYGTTTGRPRRVGWFDSVVMRHAKRVSGLTNLSLNSIDVLSGLETVKICVAYERSNGEQITHYPASLKELADCKPIYEELPGWSEDITSCRTLEEIPEAARNYVRRVGELVGVRISTFSVGPGREQTNVLESVWGV.

GTP is bound by residues G12–K18 and G40–T42. Residue D13 is the Proton acceptor of the active site. D13 and G40 together coordinate Mg(2+). Residues D13–K16, N38–H41, T128, R142, Q223, T238, and R302 contribute to the IMP site. H41 serves as the catalytic Proton donor. Residue T298–R304 participates in substrate binding. GTP contacts are provided by residues R304, S330–D332, and S413–G415.

The protein belongs to the adenylosuccinate synthetase family. As to quaternary structure, homodimer. Requires Mg(2+) as cofactor.

It is found in the cytoplasm. It carries out the reaction IMP + L-aspartate + GTP = N(6)-(1,2-dicarboxyethyl)-AMP + GDP + phosphate + 2 H(+). The protein operates within purine metabolism; AMP biosynthesis via de novo pathway; AMP from IMP: step 1/2. Plays an important role in the de novo pathway of purine nucleotide biosynthesis. Catalyzes the first committed step in the biosynthesis of AMP from IMP. The sequence is that of Adenylosuccinate synthetase from Lactococcus lactis subsp. cremoris (strain MG1363).